We begin with the raw amino-acid sequence, 93 residues long: Stromal cell-derived factor 1 (93 aa).

Positions 1–21 are cleaved as a signal peptide; it reads MDAKVVAVLALVLAALCISDG. Residues 22–23 carry the Receptor activation motif motif; the sequence is KP. Positions 29–33 are receptor and heparin binding; sequence RCPCR. 2 disulfide bridges follow: C30-C55 and C32-C71. Receptor binding stretches follow at residues 39–41, 48–50, and 60–70; these read IAR, KIL, and VARLKNNNRQV. Heparin-binding positions include 41-51, R62, Q69, and K85; that span reads RANVKHLKILN.

The protein belongs to the intercrine alpha (chemokine CxC) family. As to quaternary structure, monomer or homodimer; in equilibrium. Dimer formation is induced by non acidic pH and the presence of multivalent anions, and by binding to CXCR4 or heparin. Monomeric form is required for full chemotactic activity and resistance to ischemia/reperfusion injury, whereas the dimeric form acts as a partial agonist of CXCR4, stimulating Ca2+ mobilization but with no chemotactic activity and instead acts as a selective antagonist that blocks chemotaxis induced by the monomeric form. Interacts with the N-terminus of ACKR3. Interacts with integrin subunit ITGB3 (via the allosteric site (site 2)). Interacts with TNFAIP6 (via Link domain). In terms of tissue distribution, highest expression levels detected in kidney, liver, spleen and muscle. Isoform Alpha is expressed ubiquitously but at varying levels, while isoform Beta displays tissue-specific expression, with expression detected in kidney, liver, heart, spleen and muscle but not in lung, colon, brain, skin and stomach.

The protein localises to the secreted. Chemoattractant active on T-lymphocytes and monocytes but not neutrophils. Activates the C-X-C chemokine receptor CXCR4 to induce a rapid and transient rise in the level of intracellular calcium ions and chemotaxis. Also binds to atypical chemokine receptor ACKR3, which activates the beta-arrestin pathway and acts as a scavenger receptor for SDF-1. Binds to the allosteric site (site 2) of integrins and activates integrins ITGAV:ITGB3, ITGA4:ITGB1 and ITGA5:ITGB1 in a CXCR4-independent manner. Acts as a positive regulator of monocyte migration and a negative regulator of monocyte adhesion via the LYN kinase. Stimulates migration of monocytes and T-lymphocytes through its receptors, CXCR4 and ACKR3, and decreases monocyte adherence to surfaces coated with ICAM-1, a ligand for beta-2 integrins. SDF1A/CXCR4 signaling axis inhibits beta-2 integrin LFA-1 mediated adhesion of monocytes to ICAM-1 through LYN kinase. Plays a protective role after myocardial infarction. Induces down-regulation and internalization of ACKR3 expressed in various cells. Has several critical functions during embryonic development; required for B-cell lymphopoiesis, myelopoiesis in bone marrow and heart ventricular septum formation. Stimulates the proliferation of bone marrow-derived B-cell progenitors in the presence of IL7 as well as growth of stromal cell-dependent pre-B-cells. In Mus musculus (Mouse), this protein is Stromal cell-derived factor 1 (Cxcl12).